Reading from the N-terminus, the 185-residue chain is UPF0301 protein HCH_00550 (185 aa).

This sequence belongs to the UPF0301 (AlgH) family.

The protein is UPF0301 protein HCH_00550 of Hahella chejuensis (strain KCTC 2396).